Here is a 566-residue protein sequence, read N- to C-terminus: Protein downstream neighbor of Son (566 aa).

Positions 1-110 (MALSVPGYSP…QPEAPVPFLD (110 aa)) are disordered. Residues serine 28 and serine 34 each carry the phosphoserine modification. The span at 62-72 (GGRGGGSGGGP) shows a compositional bias: gly residues. A compositionally biased stretch (low complexity) spans 73–82 (AAARRNPFAR).

It belongs to the DONSON family. As to quaternary structure, component of the replisome complex composed of at least DONSON, MCM2, MCM7, PCNA and TICRR; interaction at least with PCNA occurs during DNA replication. In terms of tissue distribution, expressed in the brain, with higher levels in prenatal compared to adult brain.

The protein resides in the nucleus. In terms of biological role, replisome component that maintains genome stability by protecting stalled or damaged replication forks. After the induction of replication stress, required for the stabilization of stalled replication forks, the efficient activation of the intra-S-phase and G/2M cell-cycle checkpoints and the maintenance of genome stability. This is Protein downstream neighbor of Son (DONSON) from Homo sapiens (Human).